The primary structure comprises 230 residues: MDITPDSIIYWQWQWINLNATIVFSWLVMLILVLGSWLITRNLSIEPPLSRWQVALEIIVEQIRQQIRDASQQKADQFLPFIGTLFLFITMANLLTIFPVYQSPAGSLSTTAALALCVFVAVPIYGIKNVGITNYLRHYIQPTPVMLPFNLISEISRTVSLAIRLFGNIMSTSLLVAILISIVPLFFPAVMTLFGLLVGVIQAYVFTILAMVYIASGMNLQQRKTGNHHA.

5 consecutive transmembrane segments (helical) span residues 20-40, 78-98, 112-132, 174-194, and 195-215; these read ATIV…WLIT, FLPF…LTIF, AALA…NVGI, LLVA…MTLF, and GLLV…VYIA.

Belongs to the ATPase A chain family. As to quaternary structure, F-type ATPases have 2 components, CF(1) - the catalytic core - and CF(0) - the membrane proton channel. CF(1) has five subunits: alpha(3), beta(3), gamma(1), delta(1), epsilon(1). CF(0) has four main subunits: a, b, b' and c.

The protein localises to the cellular thylakoid membrane. Functionally, key component of the proton channel; it plays a direct role in the translocation of protons across the membrane. In Crocosphaera subtropica (strain ATCC 51142 / BH68) (Cyanothece sp. (strain ATCC 51142)), this protein is ATP synthase subunit a 1.